Reading from the N-terminus, the 90-residue chain is Small ribosomal subunit protein uS15 (90 aa).

The protein belongs to the universal ribosomal protein uS15 family. As to quaternary structure, part of the 30S ribosomal subunit. Forms a bridge to the 50S subunit in the 70S ribosome, contacting the 23S rRNA.

Functionally, one of the primary rRNA binding proteins, it binds directly to 16S rRNA where it helps nucleate assembly of the platform of the 30S subunit by binding and bridging several RNA helices of the 16S rRNA. Forms an intersubunit bridge (bridge B4) with the 23S rRNA of the 50S subunit in the ribosome. The protein is Small ribosomal subunit protein uS15 of Helicobacter acinonychis (strain Sheeba).